We begin with the raw amino-acid sequence, 256 residues long: Spore coat polysaccharide biosynthesis protein SpsA (256 aa).

Cys-155 and Cys-243 are oxidised to a cystine. Residue Asp-191 is part of the active site.

The protein belongs to the glycosyltransferase 2 family. In terms of assembly, monomer in solution.

It participates in spore coat biogenesis; spore coat polysaccharide biosynthesis. In terms of biological role, glycosyltransferase implicated in the synthesis of the spore coat. The protein is Spore coat polysaccharide biosynthesis protein SpsA (spsA) of Bacillus subtilis (strain 168).